The primary structure comprises 129 residues: Small ribosomal subunit protein uS11 (129 aa).

The protein belongs to the universal ribosomal protein uS11 family. In terms of assembly, part of the 30S ribosomal subunit. Interacts with proteins S7 and S18. Binds to IF-3.

In terms of biological role, located on the platform of the 30S subunit, it bridges several disparate RNA helices of the 16S rRNA. Forms part of the Shine-Dalgarno cleft in the 70S ribosome. The protein is Small ribosomal subunit protein uS11 of Bartonella tribocorum (strain CIP 105476 / IBS 506).